The primary structure comprises 78 residues: Acyl carrier protein (78 aa).

A Carrier domain is found at 1-76; it reads MSLEDDVKLI…DVITYIKTRQ (76 aa). Ser36 is modified (O-(pantetheine 4'-phosphoryl)serine).

This sequence belongs to the acyl carrier protein (ACP) family. Post-translationally, 4'-phosphopantetheine is transferred from CoA to a specific serine of apo-ACP by AcpS. This modification is essential for activity because fatty acids are bound in thioester linkage to the sulfhydryl of the prosthetic group.

The protein resides in the cytoplasm. It participates in lipid metabolism; fatty acid biosynthesis. Carrier of the growing fatty acid chain in fatty acid biosynthesis. The chain is Acyl carrier protein from Chlamydia felis (strain Fe/C-56) (Chlamydophila felis).